A 226-amino-acid polypeptide reads, in one-letter code: Cytochrome c-553I (226 aa).

A signal peptide spans Met-1–Ala-22. The interval Ala-43–Val-68 is disordered. Heme is bound by residues Cys-125, Cys-128, His-129, and Met-173. Residues Arg-203–Gly-226 form a disordered region.

Post-translationally, binds 1 heme group per subunit.

It is found in the periplasm. This is Cytochrome c-553I (cycB) from Paracoccus denitrificans.